The sequence spans 67 residues: Large ribosomal subunit protein uL29 (67 aa).

Belongs to the universal ribosomal protein uL29 family.

This chain is Large ribosomal subunit protein uL29, found in Zymomonas mobilis subsp. mobilis (strain ATCC 31821 / ZM4 / CP4).